We begin with the raw amino-acid sequence, 1150 residues long: Cohesin subunit SCC3 (1150 aa).

Positions Met-1 to Thr-12 are enriched in basic residues. Positions Met-1–Gln-122 are disordered. The residue at position 28 (Ser-28) is a Phosphoserine. A compositionally biased stretch (basic and acidic residues) spans Val-32–His-43. The segment covering Glu-44–Val-72 has biased composition (acidic residues). A compositionally biased stretch (basic residues) spans Ala-77–Lys-87. A coiled-coil region spans residues Leu-305–Gln-349. The SCD domain occupies Phe-367 to Val-457. The residue at position 628 (Ser-628) is a Phosphoserine. Positions Glu-1065–Asp-1150 are disordered. Residues Gln-1083–Asn-1101 show a composition bias toward basic and acidic residues.

Belongs to the SCC3 family. As to quaternary structure, interacts directly with MCD1 in cohesin complex. Cohesin complexes are composed of the SMC1 and SMC3 heterodimer attached via their hinge domain, MCD1 which link them, and IRR1/SCC3, which interacts with MCD1. The cohesin complex also interacts with SCC2, which is required for its association with chromosomes. Interacts with LIN1. In terms of processing, acetylated by ECO1.

The protein localises to the nucleus. Its subcellular location is the chromosome. The protein resides in the centromere. Component of cohesin complex, a complex required for the cohesion of sister chromatids after DNA replication. The cohesin complex apparently forms a large proteinaceous ring within which sister chromatids can be trapped. At anaphase, the MCD1/SCC1 subunit of the complex is cleaved and dissociates from chromatin, allowing sister chromatids to segregate. The cohesin complex may also play a role in spindle pole assembly during mitosis. The protein is Cohesin subunit SCC3 (IRR1) of Saccharomyces cerevisiae (strain ATCC 204508 / S288c) (Baker's yeast).